Reading from the N-terminus, the 70-residue chain is MRSIISLLLISAMVFSMIAAVPEEEGLQLSEDERGGCLPHNRFCNALSGPRCFSGLRCKELSIWDSRCLG.

A signal peptide spans 1-20 (MRSIISLLLISAMVFSMIAA). A propeptide spanning residues 21 to 34 (VPEEEGLQLSEDER) is cleaved from the precursor. 2 disulfide bridges follow: cysteine 44–cysteine 58 and cysteine 52–cysteine 68. At leucine 69 the chain carries Leucine amide.

The protein belongs to the neurotoxin 01 (U2-agtx) family. Post-translationally, does not contain a cysteine at position 53 which disrupts the cysteine framework. As to expression, expressed by the venom gland.

The protein resides in the secreted. Insect active toxin causing rapid but reversible paralysis in crickets. No activity shown in mammals. Does not show effect on mammalian voltage-gated calcium channels. In Agelena orientalis (Funnel-web spider), this protein is U2-agatoxin-Ao1q.